Here is a 289-residue protein sequence, read N- to C-terminus: 18S rRNA (guanine-N(7))-methyltransferase RID2 (289 aa).

The disordered stretch occupies residues 215–289 (KNEYDESCSE…FTSRKRRTRF (75 aa)). The segment covering 219-237 (DESCSEDDNSDDEESEEVG) has biased composition (acidic residues). Positions 243–254 (RPRKRQRTNTKV) are enriched in basic residues. The segment covering 255-264 (KGREWVLRKK) has biased composition (basic and acidic residues). The Nuclear localization signal motif lies at 268–275 (RRKGKNVP).

Belongs to the class I-like SAM-binding methyltransferase superfamily. BUD23/WBSCR22 family. Expressed in seedlings, roots and flowers.

It localises to the nucleus. The protein resides in the nucleoplasm. Its subcellular location is the cytoplasm. It is found in the perinuclear region. The protein localises to the nucleolus. It carries out the reaction guanosine(1575) in yeast 18S rRNA + S-adenosyl-L-methionine = N(7)-methylguanosine(1575) in yeast 18S rRNA + S-adenosyl-L-homocysteine. Essential protein. S-adenosyl-L-methionine-dependent methyltransferase that specifically methylates the N(7) position of a guanine in 18S rRNA. Requires the methyltransferase adapter protein TRM112 for full rRNA methyltransferase activity. Important for biogenesis end export of the 40S ribosomal subunit independent on its methyltransferase activity. Involved in the pre-rRNA processing steps in the nucleolus leading to small-subunit rRNA production independently of its RNA-modifying catalytic activity. Supports cell proliferation. Required for the initiation of lateral root primordia formation and for the root apical meristem (RAM) organization as well as for leaves development. During callus formation from hypocotyl and root explants, required for the initial stage of reactivation of cell proliferation in the hypocotyl stele. Involved in leaf polarity establishment by functioning cooperatively with AS2 to repress abaxial genes ARF3, ARF4, KAN1, KAN2, YAB1 and YAB5, and the knox homeobox genes KNAT1, KNAT2, KNAT6, and STM to promote adaxial development in leaf primordia at shoot apical meristems at high temperatures. This is 18S rRNA (guanine-N(7))-methyltransferase RID2 from Arabidopsis thaliana (Mouse-ear cress).